We begin with the raw amino-acid sequence, 129 residues long: Translation initiation factor 5A (129 aa).

Residue Lys-36 is modified to Hypusine.

Belongs to the eIF-5A family.

Its subcellular location is the cytoplasm. Functionally, functions by promoting the formation of the first peptide bond. This chain is Translation initiation factor 5A (eIF5A), found in Methanobrevibacter smithii (strain ATCC 35061 / DSM 861 / OCM 144 / PS).